The chain runs to 183 residues: Archaemetzincin (183 aa).

His132 lines the Zn(2+) pocket. Glu133 (proton acceptor) is an active-site residue. Zn(2+) contacts are provided by His136, His142, Cys143, Cys148, Cys167, and Cys170.

The protein belongs to the peptidase M54 family. In terms of assembly, monomer. The cofactor is Zn(2+).

Its function is as follows. Probable zinc metalloprotease whose natural substrate is unknown. In Aeropyrum pernix (strain ATCC 700893 / DSM 11879 / JCM 9820 / NBRC 100138 / K1), this protein is Archaemetzincin.